We begin with the raw amino-acid sequence, 278 residues long: Methyltransferase adrK (278 aa).

S-adenosyl-L-methionine contacts are provided by residues 124–125 (DL), 151–152 (DV), and 152–153 (VL).

It belongs to the class I-like SAM-binding methyltransferase superfamily. In terms of assembly, homodimer.

It participates in secondary metabolite biosynthesis; terpenoid biosynthesis. In terms of biological role, methyltransferase; part of the gene cluster that mediates the biosynthesis of andrastins, meroterpenoid compounds that exhibit inhibitory activity against ras farnesyltransferase, suggesting that they could be promising leads for antitumor agents. The first step of the pathway is the synthesis of 3,5-dimethylorsellinic acid (DMOA) by the polyketide synthase adrD via condensation of one acetyl-CoA starter unit with 3 malonyl-CoA units and 2 methylations. DMAO is then converted to farnesyl-DMAO by the prenyltransferase adrG. The methyltransferase adrK catalyzes the methylation of the carboxyl group of farnesyl-DMAO to farnesyl-DMAO methyl ester which is further converted to epoxyfarnesyl-DMAO methyl ester by the FAD-dependent monooxygenase adrH. The terpene cyclase adrI then catalyzes the carbon skeletal rearrangement to generate the andrastin E, the first compound in the pathway having the andrastin scaffold, with the tetracyclic ring system. The post-cyclization tailoring enzymes adrF, adrE, adrJ, and adrA, are involved in the conversion of andrastin E into andrastin A. The short chain dehydrogenase adrF is responsible for the oxidation of the C-3 a hydroxyl group of andrastin E to yield the corresponding ketone, andrastin D. The ketoreductase adrE stereoselectively reduces the carbonyl moiety to reverse the stereochemistry of the C-3 position to yield andrastin F. The acetyltransferase adrJ is the acetyltransferase that attaches the acetyl group to the C-3 hydroxyl group of andrastin F to yield andrastin C. Finally, the cytochrome P450 monooxygenase adrA catalyzes two sequential oxidation reactions of the C-23 methyl group, to generate the corresponding alcohol andrastin B, and aldehyde andrastin A. The polypeptide is Methyltransferase adrK (Penicillium roqueforti).